We begin with the raw amino-acid sequence, 384 residues long: uncharacterized protein (384 aa).

The tract at residues 1–116 (MTEMPKKKFS…FPAAPPPMDS (116 aa)) is disordered. Composition is skewed to basic and acidic residues over residues 14 to 70 (ARGD…RAGD) and 78 to 95 (RFKDKDRDKPRYGDDRPR). The S-adenosyl-L-methionine site is built by G318, I338, and L347.

This sequence belongs to the class IV-like SAM-binding methyltransferase superfamily. RNA methyltransferase TrmH family.

This is an uncharacterized protein from Synechocystis sp. (strain ATCC 27184 / PCC 6803 / Kazusa).